We begin with the raw amino-acid sequence, 287 residues long: 4-diphosphocytidyl-2-C-methyl-D-erythritol kinase (287 aa).

Lysine 14 is an active-site residue. 98–108 is a binding site for ATP; sequence PPGAGLGGGSS. The active site involves aspartate 140.

The protein belongs to the GHMP kinase family. IspE subfamily.

It carries out the reaction 4-CDP-2-C-methyl-D-erythritol + ATP = 4-CDP-2-C-methyl-D-erythritol 2-phosphate + ADP + H(+). It functions in the pathway isoprenoid biosynthesis; isopentenyl diphosphate biosynthesis via DXP pathway; isopentenyl diphosphate from 1-deoxy-D-xylulose 5-phosphate: step 3/6. Functionally, catalyzes the phosphorylation of the position 2 hydroxy group of 4-diphosphocytidyl-2C-methyl-D-erythritol. This Methylacidiphilum infernorum (isolate V4) (Methylokorus infernorum (strain V4)) protein is 4-diphosphocytidyl-2-C-methyl-D-erythritol kinase.